The sequence spans 568 residues: Urease subunit alpha (568 aa).

The 438-residue stretch at 131-568 folds into the Urease domain; that stretch reads GGMDAHIHFI…LPLAQRYFLY (438 aa). Residues histidine 136, histidine 138, and lysine 219 each coordinate Ni(2+). Lysine 219 carries the N6-carboxylysine modification. Histidine 221 contributes to the substrate binding site. The Ni(2+) site is built by histidine 248 and histidine 274. Residue histidine 322 is the Proton donor of the active site. Aspartate 362 provides a ligand contact to Ni(2+).

This sequence belongs to the metallo-dependent hydrolases superfamily. Urease alpha subunit family. As to quaternary structure, heterotrimer of UreA (gamma), UreB (beta) and UreC (alpha) subunits. Three heterotrimers associate to form the active enzyme. The cofactor is Ni cation. In terms of processing, carboxylation allows a single lysine to coordinate two nickel ions.

The protein resides in the cytoplasm. The enzyme catalyses urea + 2 H2O + H(+) = hydrogencarbonate + 2 NH4(+). The protein operates within nitrogen metabolism; urea degradation; CO(2) and NH(3) from urea (urease route): step 1/1. This Cereibacter sphaeroides (strain KD131 / KCTC 12085) (Rhodobacter sphaeroides) protein is Urease subunit alpha.